The chain runs to 269 residues: Tryptophan synthase alpha chain (269 aa).

Residues E49 and D60 each act as proton acceptor in the active site.

It belongs to the TrpA family. As to quaternary structure, tetramer of two alpha and two beta chains.

The catalysed reaction is (1S,2R)-1-C-(indol-3-yl)glycerol 3-phosphate + L-serine = D-glyceraldehyde 3-phosphate + L-tryptophan + H2O. It participates in amino-acid biosynthesis; L-tryptophan biosynthesis; L-tryptophan from chorismate: step 5/5. The alpha subunit is responsible for the aldol cleavage of indoleglycerol phosphate to indole and glyceraldehyde 3-phosphate. The polypeptide is Tryptophan synthase alpha chain (Ectopseudomonas mendocina (strain ymp) (Pseudomonas mendocina)).